Here is a 73-residue protein sequence, read N- to C-terminus: UPF0235 protein SYO3AOP1_0257 (73 aa).

The protein belongs to the UPF0235 family.

The protein is UPF0235 protein SYO3AOP1_0257 of Sulfurihydrogenibium sp. (strain YO3AOP1).